Reading from the N-terminus, the 637-residue chain is MGTASRGGSVKAEKMPEGEKTRQCKQETEQQQKEDEREGLIEFYGSYQDVFQFFCSNTTIHGAIRLVCSKKNKMKTAFWSVLFILTFGLMYWQFGILYREYFSYPVNLNLNLNSDRLTFPAVTLCTLNPYRYSAIRKKLDELDQITHQTLLDLYDYNMSLARSDGSAQFSHRRTSRSLLHHVQRHPLRRQKRDNLVSLPENSPSVDKNDWKIGFVLCSENNEDCFHQTYSSGVDAVREWYSFHYINILAQMPDAKDLDESDFENFIYACRFNEATCDKANYTHFHHPLYGNCYTFNDNSSSLWTSSLPGINNGLSLVVRTEQNDFIPLLSTVTGARVMVHDQNEPAFMDDGGFNVRPGIETSISMRKEMTERLGGSYSDCTEDGSDVPVQNLYSSRYTEQVCIRSCFQLNMVKRCSCAYYFYPLPDGAEYCDYTKHVAWGYCYYKLLAEFKADVLGCFHKCRKPCKMTEYQLSAGYSRWPSAVSEDWVFYMLSQQNKYNITSKRNGVAKVNIFFEEWNYKTNGESPAFTVVTLLSQLGNQWSLWFGSSVLSVMELAELILDFTVITFILAFRWFRSKQWHSSPAPPPNSHDNTAFQDEASGLDAPHRFTVEAVVTTLPSYNSLEPCGPSKDGETGLE.

Residues 1–34 form a disordered region; it reads MGTASRGGSVKAEKMPEGEKTRQCKQETEQQQKE. Topologically, residues 1 to 76 are cytoplasmic; the sequence is MGTASRGGSV…VCSKKNKMKT (76 aa). The segment covering 11–34 has biased composition (basic and acidic residues); that stretch reads KAEKMPEGEKTRQCKQETEQQQKE. The chain crosses the membrane as a helical span at residues 77–97; sequence AFWSVLFILTFGLMYWQFGIL. The Extracellular portion of the chain corresponds to 98–548; that stretch reads YREYFSYPVN…NQWSLWFGSS (451 aa). Cystine bridges form between C125-C292, C217-C224, C269-C276, C380-C465, C402-C442, C402-C461, C406-C457, C415-C442, C415-C465, and C417-C431. Residues 549 to 569 traverse the membrane as a helical segment; that stretch reads VLSVMELAELILDFTVITFIL. Over 570–637 the chain is Cytoplasmic; sequence AFRWFRSKQW…PSKDGETGLE (68 aa).

It belongs to the amiloride-sensitive sodium channel (TC 1.A.6) family. SCNN1A subfamily. In terms of assembly, heterotrimer; containing an alpha/SCNN1A, a beta/SCNN1B and a gamma/SCNN1G subunit. In terms of tissue distribution, the long isoform has been found in cochlea, colon, and cartilage. The short isoform is only found in cochlea.

It is found in the apical cell membrane. The protein localises to the cell projection. Its subcellular location is the cilium. It localises to the cytoplasmic granule. The protein resides in the cytoplasm. It is found in the cytoplasmic vesicle. The protein localises to the secretory vesicle. Its subcellular location is the acrosome. It localises to the flagellum. The catalysed reaction is Na(+)(in) = Na(+)(out). Its activity is regulated as follows. Originally identified and characterized by its inhibition by the diuretic drug amiloride. Its function is as follows. This is one of the three pore-forming subunits of the heterotrimeric epithelial sodium channel (ENaC), a critical regulator of sodium balance and fluid homeostasis. ENaC operates in epithelial tissues, where it mediates the electrodiffusion of sodium ions from extracellular fluid through the apical membrane of cells, with water following osmotically. In Gallus gallus (Chicken), this protein is Epithelial sodium channel subunit alpha.